The primary structure comprises 265 residues: Small ribosomal subunit protein eS1 (265 aa).

Disordered stretches follow at residues 1 to 24 and 240 to 265; these read MTQGKNPGLKAGGGKKGAKKRTID and HEKKGEKATGRDGAPEEQAAQNLLAQ. Over residues 240-253 the composition is skewed to basic and acidic residues; sequence HEKKGEKATGRDGA.

It belongs to the eukaryotic ribosomal protein eS1 family. In terms of assembly, component of the small ribosomal subunit. Mature ribosomes consist of a small (40S) and a large (60S) subunit. The 40S subunit contains about 33 different proteins and 1 molecule of RNA (18S). The 60S subunit contains about 49 different proteins and 3 molecules of RNA (25S, 5.8S and 5S).

Its subcellular location is the cytoplasm. This Tetrahymena thermophila (strain SB210) protein is Small ribosomal subunit protein eS1.